A 343-amino-acid chain; its full sequence is MLFAMQLASASVLPMVLKSAIELDLLEIIRGQDTCMSPTEIASHLPTTNPDAPAMVDRILRLLSCYSVVTCSVRSVDDQRVYGLAPVCKYLTKNQDGVSIAALCLMNQDKVLMESWYHLKDAVLDGGIPFNKAYGMSSFEYHGTDPRFNKVFNRGMSDHSTITMKKVFQAYQGFQGLTSLVDVGGGTGATLTMILSKYPTIRCINFDLPHVIEDAPEYPGIEHVGGDMFVSVPKGDAIFMKWICHDWSDEHCLKLLKNCYDALPNNGKVILAECILPEVPDSSLATKGVVHIDVITVAHNPGGKERTEKEFEALAKAAGFQGFQVFCNAFNTYIIEFSKQICN.

A (E)-ferulate-binding site is contributed by Asn-107. S-adenosyl-L-homocysteine contacts are provided by Gly-184, Asp-207, Asp-227, Met-228, Met-240, and Lys-241. The active-site Proton acceptor is His-245. Asp-246 is a (E)-5-hydroxyferulate binding site. Catalysis depends on residues Glu-273 and Glu-305.

This sequence belongs to the class I-like SAM-binding methyltransferase superfamily. Cation-independent O-methyltransferase family. COMT subfamily. Homodimer.

The catalysed reaction is (E)-5-hydroxyferulate + S-adenosyl-L-methionine = (E)-sinapate + S-adenosyl-L-homocysteine + H(+). It catalyses the reaction luteolin + S-adenosyl-L-methionine = chrysoeriol + S-adenosyl-L-homocysteine + H(+). It carries out the reaction quercetin + S-adenosyl-L-methionine = isorhamnetin + S-adenosyl-L-homocysteine + H(+). The enzyme catalyses (E)-caffeate + S-adenosyl-L-methionine = (E)-ferulate + S-adenosyl-L-homocysteine + H(+). The catalysed reaction is a 3'-hydroxyflavone + S-adenosyl-L-methionine = a 3'-methoxyflavone + S-adenosyl-L-homocysteine + H(+). It functions in the pathway flavonoid metabolism. In terms of biological role, catalyzes the 3'-O-methylation of the flavonoids luteolin and quercetin. Catalyzes the 3- of 5-O-methylation of the phenylpropanoids caffeate and 5-hydroxyferulate. Substrate preference is 5-hydroxyferulate &gt; luteolin &gt; quercetin &gt; caffeate. Apigenin, kempferol and 3,4-dimethylquercetin do not seem to be substrates for methylation. The polypeptide is Flavone 3'-O-methyltransferase OMT1 (Chrysosplenium americanum (American golden saxifrage)).